The sequence spans 417 residues: MSLPFSLSVAARRIEALLGDLSRFPWKTTAQTLRERFRADHLGLTASSLTFTTILALVPFFTVALAVFTAFPIFGQLQDALQGWLVSSLVPDSIARQVLGYLTQFAAKASGLGLAGFSVLLVTALALILTIDRTLNDIWRVQRLRPLGQRVLIYWAAITLGPLLLGASLALTSYVMSASGGLVKRLPDGVRFLFDSLQFMVLAAGMALLYHYVPNTPVRWRHAWSGGLFVALCIELAKKALALYLGRVPTYSVVYGAFATLPILLVWIYMAWVIVLLGAVVTAYLPSLLAGVARRGTVAGWTFQLALEVLQQLHRVRHDAGKGLRAGQLAQLLRVDVLQLEPVLESLTALDWVGQVSAVVVAASDPPEPRYVLLADPQSTLLEPLVHKLLLERSESLGPLWDKAGLGRLQMADVLAR.

6 helical membrane passes run 54–74, 111–131, 151–171, 192–212, 226–246, and 261–281; these read ILALVPFFTVALAVFTAFPIF, GLGLAGFSVLLVTALALILTI, VLIYWAAITLGPLLLGASLAL, FLFDSLQFMVLAAGMALLYHY, GGLFVALCIELAKKALALYLG, and LPILLVWIYMAWVIVLLGAVV.

The protein belongs to the UPF0761 family.

The protein resides in the cell inner membrane. The sequence is that of UPF0761 membrane protein Veis_3782 from Verminephrobacter eiseniae (strain EF01-2).